Reading from the N-terminus, the 300-residue chain is Ribosomal RNA small subunit methyltransferase H (300 aa).

Residues 46–48, Asp-65, Phe-92, Asp-107, and Gln-114 contribute to the S-adenosyl-L-methionine site; that span reads GGH.

This sequence belongs to the methyltransferase superfamily. RsmH family.

It is found in the cytoplasm. It carries out the reaction cytidine(1402) in 16S rRNA + S-adenosyl-L-methionine = N(4)-methylcytidine(1402) in 16S rRNA + S-adenosyl-L-homocysteine + H(+). Its function is as follows. Specifically methylates the N4 position of cytidine in position 1402 (C1402) of 16S rRNA. The chain is Ribosomal RNA small subunit methyltransferase H from Prochlorococcus marinus (strain AS9601).